The sequence spans 200 residues: Pyridoxal 5'-phosphate synthase subunit PdxT (200 aa).

Residue 50–52 (GES) participates in L-glutamine binding. Cys82 acts as the Nucleophile in catalysis. Residues Arg110 and 138–139 (IR) contribute to the L-glutamine site. Active-site charge relay system residues include His174 and Glu176.

Belongs to the glutaminase PdxT/SNO family. In the presence of PdxS, forms a dodecamer of heterodimers. Only shows activity in the heterodimer.

It catalyses the reaction aldehydo-D-ribose 5-phosphate + D-glyceraldehyde 3-phosphate + L-glutamine = pyridoxal 5'-phosphate + L-glutamate + phosphate + 3 H2O + H(+). The enzyme catalyses L-glutamine + H2O = L-glutamate + NH4(+). It functions in the pathway cofactor biosynthesis; pyridoxal 5'-phosphate biosynthesis. Catalyzes the hydrolysis of glutamine to glutamate and ammonia as part of the biosynthesis of pyridoxal 5'-phosphate. The resulting ammonia molecule is channeled to the active site of PdxS. This Oceanobacillus iheyensis (strain DSM 14371 / CIP 107618 / JCM 11309 / KCTC 3954 / HTE831) protein is Pyridoxal 5'-phosphate synthase subunit PdxT.